The sequence spans 553 residues: Dihydroxy-acid dehydratase 1 (553 aa).

D78 contacts Mg(2+). A [2Fe-2S] cluster-binding site is contributed by C119. Mg(2+) contacts are provided by D120 and K121. K121 is subject to N6-carboxylysine. C191 lines the [2Fe-2S] cluster pocket. Position 444 (E444) interacts with Mg(2+). S470 functions as the Proton acceptor in the catalytic mechanism.

This sequence belongs to the IlvD/Edd family. In terms of assembly, homodimer. The cofactor is [2Fe-2S] cluster. Requires Mg(2+) as cofactor.

It carries out the reaction (2R)-2,3-dihydroxy-3-methylbutanoate = 3-methyl-2-oxobutanoate + H2O. It catalyses the reaction (2R,3R)-2,3-dihydroxy-3-methylpentanoate = (S)-3-methyl-2-oxopentanoate + H2O. The protein operates within amino-acid biosynthesis; L-isoleucine biosynthesis; L-isoleucine from 2-oxobutanoate: step 3/4. Its pathway is amino-acid biosynthesis; L-valine biosynthesis; L-valine from pyruvate: step 3/4. Functions in the biosynthesis of branched-chain amino acids. Catalyzes the dehydration of (2R,3R)-2,3-dihydroxy-3-methylpentanoate (2,3-dihydroxy-3-methylvalerate) into 2-oxo-3-methylpentanoate (2-oxo-3-methylvalerate) and of (2R)-2,3-dihydroxy-3-methylbutanoate (2,3-dihydroxyisovalerate) into 2-oxo-3-methylbutanoate (2-oxoisovalerate), the penultimate precursor to L-isoleucine and L-valine, respectively. This is Dihydroxy-acid dehydratase 1 from Methanosarcina acetivorans (strain ATCC 35395 / DSM 2834 / JCM 12185 / C2A).